A 1044-amino-acid chain; its full sequence is Probable translation initiation factor IF-2 (1044 aa).

The 93-residue stretch at 173–265 folds into the DOD-type homing endonuclease domain; the sequence is FAGTIFGREN…LSLILLRLGI (93 aa). The tr-type G domain occupies 451-668; it reads TTETHNFIAN…LIAGLSQKYL (218 aa). GTP contacts are provided by residues 524-528 and 578-581; these read DTPGH and NKID.

The protein belongs to the TRAFAC class translation factor GTPase superfamily. Classic translation factor GTPase family. IF-2 subfamily. This protein undergoes a protein self splicing that involves a post-translational excision of the intervening region (intein) followed by peptide ligation.

In terms of biological role, function in general translation initiation by promoting the binding of the formylmethionine-tRNA to ribosomes. Seems to function along with eIF-2. In Pyrococcus horikoshii (strain ATCC 700860 / DSM 12428 / JCM 9974 / NBRC 100139 / OT-3), this protein is Probable translation initiation factor IF-2 (infB).